Reading from the N-terminus, the 123-residue chain is WAP four-disulfide core domain protein 5 (123 aa).

The signal sequence occupies residues 1–24 (MRFGRLLLLAVLLAGVSQLPAVSG). 2 consecutive WAP domains span residues 27–74 (KGEK…IPRV) and 75–121 (SVKL…RDPV). Cystine bridges form between cysteine 34/cysteine 62, cysteine 41/cysteine 66, cysteine 49/cysteine 61, cysteine 55/cysteine 70, cysteine 81/cysteine 109, cysteine 88/cysteine 113, cysteine 96/cysteine 108, and cysteine 102/cysteine 117.

The protein localises to the secreted. In terms of biological role, putative acid-stable proteinase inhibitor. The protein is WAP four-disulfide core domain protein 5 (WFDC5) of Otolemur garnettii (Small-eared galago).